We begin with the raw amino-acid sequence, 1637 residues long: Serine/threonine-protein kinase Genghis Khan (1637 aa).

The region spanning F100–F369 is the Protein kinase domain. ATP is bound by residues I106–V114 and K129. D224 (proton acceptor) is an active-site residue. One can recognise an AGC-kinase C-terminal domain in the interval V370–S440. Coiled-coil stretches lie at residues V473–V587, S643–T688, and D839–K881. The interval R538–T575 is disordered. The span at D563–T575 shows a compositional bias: basic and acidic residues. T895 is modified (phosphothreonine). Residues N952–E971 are disordered. The Phorbol-ester/DAG-type zinc-finger motif lies at I989–C1039. Residues G1059–R1177 enclose the PH domain. The 287-residue stretch at I1203–V1489 folds into the CNH domain. The region spanning I1546–G1559 is the CRIB domain. S1584 bears the Phosphoserine mark. Residues D1611–D1637 are disordered. Residues N1616–A1626 show a composition bias toward polar residues.

Belongs to the protein kinase superfamily. AGC Ser/Thr protein kinase family. DMPK subfamily. In terms of assembly, interacts tightly with GTP-bound but not GDP-bound Cdc42.

The catalysed reaction is L-seryl-[protein] + ATP = O-phospho-L-seryl-[protein] + ADP + H(+). The enzyme catalyses L-threonyl-[protein] + ATP = O-phospho-L-threonyl-[protein] + ADP + H(+). Functionally, acts as a downstream effector for the regulation of actin polymerization by Cdc42. This is Serine/threonine-protein kinase Genghis Khan (gek) from Drosophila melanogaster (Fruit fly).